The following is a 176-amino-acid chain: Inner membrane-spanning protein YciB (176 aa).

The next 5 helical transmembrane spans lie at 22–42 (IYYA…YTWL), 50–70 (VALI…YYHN), 81–101 (IYSL…KPLI), 121–141 (IAWA…AFWL), and 149–169 (FKVF…GIYI).

Belongs to the YciB family.

The protein localises to the cell inner membrane. Plays a role in cell envelope biogenesis, maintenance of cell envelope integrity and membrane homeostasis. This Sodalis glossinidius (strain morsitans) protein is Inner membrane-spanning protein YciB.